We begin with the raw amino-acid sequence, 76 residues long: Defensin-like protein 164 (76 aa).

The N-terminal stretch at 1-25 is a signal peptide; the sequence is MAKLLCSYLFICMFVLSGFLVFSSA. 4 disulfide bridges follow: Cys-31-Cys-76, Cys-41-Cys-61, Cys-46-Cys-70, and Cys-50-Cys-72.

This sequence belongs to the DEFL family.

Its subcellular location is the secreted. The protein is Defensin-like protein 164 (LCR38) of Arabidopsis thaliana (Mouse-ear cress).